The following is a 313-amino-acid chain: 3-O-acetylpapaveroxine carboxylesterase CXE2 (313 aa).

Positions 72 to 74 (HGG) match the Involved in the stabilization of the negatively charged intermediate by the formation of the oxyanion hole motif. Residues S158, D262, and H292 contribute to the active site.

Belongs to the 'GDXG' lipolytic enzyme family.

It carries out the reaction 3-O-acetylpapaveroxine + H2O = narcotine hemiacetal + acetate + H(+). It participates in alkaloid biosynthesis. Functionally, carboxylesterase involved in the biosynthesis of the benzylisoquinoline alkaloid noscapine. Converts 3-O-acetylpapaveroxine to narcotine hemiacetal. This is 3-O-acetylpapaveroxine carboxylesterase CXE2 from Papaver somniferum (Opium poppy).